Here is a 316-residue protein sequence, read N- to C-terminus: Phospho-N-acetylmuramoyl-pentapeptide-transferase (316 aa).

Helical transmembrane passes span 5-25 (IILA…LFIP), 49-69 (GTPT…TLIF), 76-96 (LAIL…DDFL), 116-136 (FLLA…EVIF), 141-161 (TTID…VGTV), 172-192 (GLAA…ALFL), 195-212 (ITYG…LGFL), 221-241 (IFMG…AAVL), 244-264 (LPLI…SVII), and 296-316 (VVYA…YSLS).

The protein belongs to the glycosyltransferase 4 family. MraY subfamily. Requires Mg(2+) as cofactor.

It is found in the cell membrane. The enzyme catalyses UDP-N-acetyl-alpha-D-muramoyl-L-alanyl-gamma-D-glutamyl-meso-2,6-diaminopimeloyl-D-alanyl-D-alanine + di-trans,octa-cis-undecaprenyl phosphate = di-trans,octa-cis-undecaprenyl diphospho-N-acetyl-alpha-D-muramoyl-L-alanyl-D-glutamyl-meso-2,6-diaminopimeloyl-D-alanyl-D-alanine + UMP. It functions in the pathway cell wall biogenesis; peptidoglycan biosynthesis. Catalyzes the initial step of the lipid cycle reactions in the biosynthesis of the cell wall peptidoglycan: transfers peptidoglycan precursor phospho-MurNAc-pentapeptide from UDP-MurNAc-pentapeptide onto the lipid carrier undecaprenyl phosphate, yielding undecaprenyl-pyrophosphoryl-MurNAc-pentapeptide, known as lipid I. In Thermoanaerobacter pseudethanolicus (strain ATCC 33223 / 39E) (Clostridium thermohydrosulfuricum), this protein is Phospho-N-acetylmuramoyl-pentapeptide-transferase.